A 472-amino-acid chain; its full sequence is Lycopene beta cyclase, chloroplastic (472 aa).

The N-terminal 25 residues, 1–25 (MDALLTSPFIPLKKPSHNRKSNTTT), are a transit peptide targeting the chloroplast. The interval 1-27 (MDALLTSPFIPLKKPSHNRKSNTTTAS) is disordered. 62–90 (LAVVGGGPAGLAVAKRVSDAGLSVCSIDP) contributes to the NAD(+) binding site.

It belongs to the lycopene cyclase family. As to expression, expressed in flower buds and lips. Detected in roots and leaves.

It is found in the plastid. The protein resides in the chloroplast. It carries out the reaction a carotenoid psi-end group = a carotenoid beta-end derivative. It participates in carotenoid biosynthesis; beta-carotene biosynthesis. The protein operates within carotenoid biosynthesis; beta-zeacarotene biosynthesis. In terms of biological role, catalyzes the double cyclization reaction which converts lycopene to beta-carotene and neurosporene to beta-zeacarotene. The chain is Lycopene beta cyclase, chloroplastic (LCY-B) from Oncidium hybrid cultivar (Orchid).